Here is a 660-residue protein sequence, read N- to C-terminus: Arginine--tRNA ligase, cytoplasmic (660 aa).

M1 bears the N-acetylmethionine mark. Positions 1-72 (MDALVAHCSA…QAERNKPTKT (72 aa)) are could be involved in the assembly of the multisynthetase complex. L-arginine contacts are provided by residues 200–202 (SPN), H211, Y384, D388, and Q412. The 'HIGH' region motif lies at 201–212 (PNIAKEMHVGHL). The segment at 529 to 543 (NTAAYLLYAFTRIRS) is interaction with tRNA.

It belongs to the class-I aminoacyl-tRNA synthetase family. In terms of assembly, interacts (via N-terminus) with AIMP1 (via N-terminus); this stimulates its catalytic activity. Interacts (via N-terminus) with LARS2 (via C-terminus). Monomer. Part of a multisubunit complex that groups tRNA ligases for Arg (RARS1), Asp (DARS1), Gln (QARS1), Ile (IARS1), Leu (LARS1), Lys (KARS1), Met (MARS1) the bifunctional ligase for Glu and Pro (EPRS1) and the auxiliary subunits AIMP1/p43, AIMP2/p38 and EEF1E1/p18. Interacts with QARS1. Part of a complex composed of RARS1, QARS1 and AIMP1.

It localises to the cytoplasm. The protein resides in the cytosol. It catalyses the reaction tRNA(Arg) + L-arginine + ATP = L-arginyl-tRNA(Arg) + AMP + diphosphate. Its function is as follows. Forms part of a macromolecular complex that catalyzes the attachment of specific amino acids to cognate tRNAs during protein synthesis. Modulates the secretion of AIMP1 and may be involved in generation of the inflammatory cytokine EMAP2 from AIMP1. The sequence is that of Arginine--tRNA ligase, cytoplasmic (RARS1) from Bos taurus (Bovine).